Here is a 364-residue protein sequence, read N- to C-terminus: Alanine racemase (364 aa).

K35 (proton acceptor; specific for D-alanine) is an active-site residue. K35 carries the post-translational modification N6-(pyridoxal phosphate)lysine. R130 is a binding site for substrate. Y256 (proton acceptor; specific for L-alanine) is an active-site residue. M304 lines the substrate pocket.

The protein belongs to the alanine racemase family. Pyridoxal 5'-phosphate is required as a cofactor.

It carries out the reaction L-alanine = D-alanine. Its pathway is amino-acid biosynthesis; D-alanine biosynthesis; D-alanine from L-alanine: step 1/1. In terms of biological role, catalyzes the interconversion of L-alanine and D-alanine. May also act on other amino acids. This chain is Alanine racemase (alr), found in Polaromonas sp. (strain JS666 / ATCC BAA-500).